Here is a 912-residue protein sequence, read N- to C-terminus: Protein translocase subunit SecA (912 aa).

ATP-binding positions include Q87, 105 to 109 (GEGKT), and D508. Positions 855 to 912 (QHQDAGGYGADEEVEQMQGGNAPVPVSQVTRDEPKVGRNDPCPCGSGKKYKHCHGQLS) are disordered. The Zn(2+) site is built by C896, C898, C907, and H908. The span at 902–912 (KKYKHCHGQLS) shows a compositional bias: basic residues.

The protein belongs to the SecA family. As to quaternary structure, monomer and homodimer. Part of the essential Sec protein translocation apparatus which comprises SecA, SecYEG and auxiliary proteins SecDF-YajC and YidC. It depends on Zn(2+) as a cofactor.

The protein resides in the cell inner membrane. It is found in the cytoplasm. The enzyme catalyses ATP + H2O + cellular proteinSide 1 = ADP + phosphate + cellular proteinSide 2.. Functionally, part of the Sec protein translocase complex. Interacts with the SecYEG preprotein conducting channel. Has a central role in coupling the hydrolysis of ATP to the transfer of proteins into and across the cell membrane, serving both as a receptor for the preprotein-SecB complex and as an ATP-driven molecular motor driving the stepwise translocation of polypeptide chains across the membrane. The chain is Protein translocase subunit SecA from Xanthomonas campestris pv. campestris (strain B100).